A 273-amino-acid polypeptide reads, in one-letter code: DnaJ homolog subfamily C member 27-A (273 aa).

GTP contacts are provided by residues Gly23–Ser30, Asp71–His75, and Asn134–Asp137. A J domain is found at Asp217–Lys273.

The protein belongs to the small GTPase superfamily. Rab family.

The protein resides in the nucleus. Its function is as follows. GTPase possibly involved in regulation of the MEK/ERK pathway. The polypeptide is DnaJ homolog subfamily C member 27-A (dnajc27-a) (Xenopus laevis (African clawed frog)).